The following is a 55-amino-acid chain: Large ribosomal subunit protein bL33 (55 aa).

This sequence belongs to the bacterial ribosomal protein bL33 family.

This Xanthobacter autotrophicus (strain ATCC BAA-1158 / Py2) protein is Large ribosomal subunit protein bL33.